The following is a 383-amino-acid chain: Probable indole-3-pyruvate monooxygenase YUCCA10 (383 aa).

9–14 (GAGPAG) is an FAD binding site. 177-182 (GGGNSG) provides a ligand contact to NADP(+).

It belongs to the FMO family. The cofactor is FAD.

It carries out the reaction indole-3-pyruvate + NADPH + O2 + H(+) = (indol-3-yl)acetate + CO2 + NADP(+) + H2O. Its pathway is plant hormone metabolism; auxin biosynthesis. Involved in auxin biosynthesis. This Arabidopsis thaliana (Mouse-ear cress) protein is Probable indole-3-pyruvate monooxygenase YUCCA10 (YUC10).